The following is a 64-amino-acid chain: Large ribosomal subunit protein bL33c (64 aa).

Belongs to the bacterial ribosomal protein bL33 family.

It localises to the plastid. The protein localises to the chloroplast. In Mesostigma viride (Green alga), this protein is Large ribosomal subunit protein bL33c (rpl33).